The chain runs to 143 residues: MQKRRQSGFTLLEVMVVIVILGILASLVVPNLMGNKEKADQQKAVSDIVALENALDMYKLDNNRYPTTEQGLDALVNKPTAAPEPRSYRDGGYIKRLPQDPWGNPYQMLSPGQFGKIDIFSMGLDGEAGTDDDIGNWNLKDFQ.

A propeptide spans 1-8 (leader sequence); it reads MQKRRQSG. The residue at position 9 (phenylalanine 9) is an N-methylphenylalanine. The chain crosses the membrane as a helical span at residues 9 to 29; the sequence is FTLLEVMVVIVILGILASLVV. Positions 70-92 are disordered; that stretch reads QGLDALVNKPTAAPEPRSYRDGG.

This sequence belongs to the GSP G family. Type II secretion system is composed of four main components: the outer membrane complex, the inner membrane complex, the cytoplasmic secretion ATPase and the periplasm-spanning pseudopilus. Forms homomultimers. Cleaved by the prepilin peptidase. In terms of processing, methylated by prepilin peptidase at the amino group of the N-terminal phenylalanine once the leader sequence is cleaved.

The protein resides in the cell inner membrane. In terms of biological role, core component of the type II secretion system required for the energy-dependent secretion of extracellular factors such as proteases and toxins from the periplasm. Pseudopilin (pilin-like) protein that polymerizes to form the pseudopilus. Further polymerization triggers pseudopilus growth. The chain is Type II secretion system core protein G (exeG) from Aeromonas hydrophila.